The sequence spans 353 residues: Rhodopsin (353 aa).

The Extracellular portion of the chain corresponds to 1-36; that stretch reads MNGTEGDNFYVPFSNKTGLARSPYEYPQYYLAEPWK. N-linked (GlcNAc...) asparagine glycans are attached at residues N2 and N15. A helical transmembrane segment spans residues 37 to 61; that stretch reads YSALAAYMFFLILVGFPVNFLTLFV. Over 62–73 the chain is Cytoplasmic; it reads TVQHKKLRTPLN. The chain crosses the membrane as a helical span at residues 74–96; that stretch reads YILLNLAMANLFMVLFGFTVTMY. The Extracellular segment spans residues 97–110; that stretch reads TSMNGYFVFGPTMC. C110 and C187 are joined by a disulfide. A helical transmembrane segment spans residues 111-133; that stretch reads SIEGFFATLGGEVALWSLVVLAI. A 'Ionic lock' involved in activated form stabilization motif is present at residues 134 to 136; sequence ERY. Residues 134–152 are Cytoplasmic-facing; sequence ERYIVICKPMGNFRFGNTH. The helical transmembrane segment at 153–173 threads the bilayer; sequence AIMGVAFTWIMALACAAPPLV. At 174-202 the chain is on the extracellular side; the sequence is GWSRYIPEGMQCSCGPDYYTLNPNFNNES. Residues 203-224 traverse the membrane as a helical segment; that stretch reads YVVYMFVVHFLVPFVIIFFCYG. The Cytoplasmic segment spans residues 225–252; sequence RLLCTVKEAAAAQQESASTQKAEKEVTR. A helical transmembrane segment spans residues 253-274; sequence MVVLMVIGFLVCWVPYASVAFY. Topologically, residues 275–286 are extracellular; it reads IFTHQGSDFGAT. The chain crosses the membrane as a helical span at residues 287–308; the sequence is FMTLPAFFAKSSALYNPVIYIL. K296 carries the post-translational modification N6-(retinylidene)lysine. The Cytoplasmic segment spans residues 309 to 353; that stretch reads MNKQFRNCMITTLCCGKNPLGDDESGASTSKTEVSSVSTSPVSPA. Residues 330–353 are disordered; that stretch reads DDESGASTSKTEVSSVSTSPVSPA. Positions 336-353 are enriched in low complexity; sequence STSKTEVSSVSTSPVSPA.

This sequence belongs to the G-protein coupled receptor 1 family. Opsin subfamily. In terms of processing, phosphorylated on some or all of the serine and threonine residues present in the C-terminal region. Post-translationally, contains one covalently linked retinal chromophore. As to expression, short photoreceptor cells.

The protein resides in the membrane. It localises to the cell projection. Its subcellular location is the cilium. It is found in the photoreceptor outer segment. Photoreceptor required for image-forming vision at low light intensity. While most salt water fish species use retinal as chromophore, most freshwater fish use 3-dehydroretinal, or a mixture of retinal and 3-dehydroretinal. Light-induced isomerization of 11-cis to all-trans retinal triggers a conformational change that activates signaling via G-proteins. Subsequent receptor phosphorylation mediates displacement of the bound G-protein alpha subunit by arrestin and terminates signaling. This Lethenteron camtschaticum (Japanese lamprey) protein is Rhodopsin (RHO).